The chain runs to 470 residues: UDP-glycosyltransferase 75C1 (470 aa).

H16 serves as the catalytic Proton acceptor. H16 contacts an anthocyanidin. Residues Q347, H362, W365, N366, S367, E370, D386, and Q387 each contribute to the UDP-alpha-D-glucose site.

This sequence belongs to the UDP-glycosyltransferase family. As to expression, expressed in flowers and fruits, especially in pulp, and, at lower levels, in seeds.

It is found in the cytoplasm. The protein localises to the nucleus. It catalyses the reaction 2-cis-(+)-abscisate + UDP-alpha-D-glucose = beta-D-glucopyranosyl cis-(+)-abscisate + UDP. It carries out the reaction (indol-3-yl)acetate + UDP-alpha-D-glucose = 1-O-(indol-3-ylacetyl)-beta-D-glucose + UDP. In terms of biological role, glucosyltransferase acting on both abscisic acid (ABA) and auxin (IAA). Required for ABA-mediated fruit ripening, seed germination, and negative responses to drought. In Solanum lycopersicum (Tomato), this protein is UDP-glycosyltransferase 75C1.